A 96-amino-acid chain; its full sequence is Large ribosomal subunit protein bL21 (96 aa).

This sequence belongs to the bacterial ribosomal protein bL21 family. Part of the 50S ribosomal subunit. Contacts protein L20.

In terms of biological role, this protein binds to 23S rRNA in the presence of protein L20. This chain is Large ribosomal subunit protein bL21, found in Chlorobium phaeobacteroides (strain BS1).